Consider the following 116-residue polypeptide: NADH-ubiquinone oxidoreductase chain 3 (116 aa).

Helical transmembrane passes span 3–23 (LITT…TVSF), 56–76 (FFLI…LLPL), and 85–105 (PALT…GLIY).

The protein belongs to the complex I subunit 3 family.

It localises to the mitochondrion membrane. The catalysed reaction is a ubiquinone + NADH + 5 H(+)(in) = a ubiquinol + NAD(+) + 4 H(+)(out). Its function is as follows. Core subunit of the mitochondrial membrane respiratory chain NADH dehydrogenase (Complex I) that is believed to belong to the minimal assembly required for catalysis. Complex I functions in the transfer of electrons from NADH to the respiratory chain. The immediate electron acceptor for the enzyme is believed to be ubiquinone. This is NADH-ubiquinone oxidoreductase chain 3 (MT-ND3) from Salmo trutta (Brown trout).